The chain runs to 398 residues: Inner membrane protein YjgN (398 aa).

Topologically, residues 1 to 24 are cytoplasmic; it reads MAQVINEMDVPSHSFVFHGTGERY. Residues 25-45 form a helical membrane-spanning segment; sequence FLICVVNVLLTIITLGIYLPW. Residues 46-73 are Periplasmic-facing; it reads ALMKCKRYLYANMEVNGQRFSYGITGGN. A helical membrane pass occupies residues 74-94; the sequence is VFFSCLVFVFFYFAILMTVSA. Position 95 (Asp95) is a topological domain, cytoplasmic. A helical membrane pass occupies residues 96 to 116; it reads MPLIGCVLTLSLLVLLIFMAA. Residues 117–142 lie on the Periplasmic side of the membrane; sequence KGLRYQALMTSLNGVRFSFNCSMKGV. The chain crosses the membrane as a helical span at residues 143-163; the sequence is WWVTFFLPILMAIGMGTVFFI. The Cytoplasmic portion of the chain corresponds to 164–175; it reads STKMLHANSSSS. Residues 176-196 form a helical membrane-spanning segment; it reads VIVSVVLMAIVGIVSIGIFNG. Residues 197–228 lie on the Periplasmic side of the membrane; sequence TLYSLVMSFLWSNTSFGIHRFKVKLDTAYCIK. A helical transmembrane segment spans residues 229-249; it reads YAILAFLALLPFLAVAGYIIF. Over 250–278 the chain is Cytoplasmic; the sequence is DQILNAYDSSVYANDDIENLQQFMEMQRK. A helical membrane pass occupies residues 279–299; the sequence is MIIAQLIYYFGIAVSTSYLTV. The Periplasmic segment spans residues 300-333; the sequence is SLRNHFMSNLSLNDGRIRFRSTLTYHGMLYRMCA. The chain crosses the membrane as a helical span at residues 334-354; that stretch reads LVVISGITGGLAYPLLKIWMI. Topologically, residues 355 to 398 are cytoplasmic; sequence DWQAKNTYLLGDLDDLPLINKEEQPDKGFLASISRGIMPSLPFL.

The protein localises to the cell inner membrane. The protein is Inner membrane protein YjgN (yjgN) of Escherichia coli O157:H7.